Consider the following 351-residue polypeptide: UDP-3-O-acylglucosamine N-acyltransferase (351 aa).

His240 functions as the Proton acceptor in the catalytic mechanism.

It belongs to the transferase hexapeptide repeat family. LpxD subfamily. Homotrimer.

The catalysed reaction is a UDP-3-O-[(3R)-3-hydroxyacyl]-alpha-D-glucosamine + a (3R)-hydroxyacyl-[ACP] = a UDP-2-N,3-O-bis[(3R)-3-hydroxyacyl]-alpha-D-glucosamine + holo-[ACP] + H(+). It functions in the pathway bacterial outer membrane biogenesis; LPS lipid A biosynthesis. Functionally, catalyzes the N-acylation of UDP-3-O-acylglucosamine using 3-hydroxyacyl-ACP as the acyl donor. Is involved in the biosynthesis of lipid A, a phosphorylated glycolipid that anchors the lipopolysaccharide to the outer membrane of the cell. The chain is UDP-3-O-acylglucosamine N-acyltransferase from Pseudomonas entomophila (strain L48).